The chain runs to 182 residues: Allergen Bla g 4 (182 aa).

The N-terminal stretch at 1–12 is a signal peptide; sequence AVLALCATDTLA. N72 is a glycosylation site (N-linked (GlcNAc...) asparagine).

Belongs to the calycin superfamily. Triabin family.

It is found in the secreted. Functionally, probable ligand-binding protein. This is Allergen Bla g 4 from Blattella germanica (German cockroach).